We begin with the raw amino-acid sequence, 153 residues long: Ribosome maturation factor RimP (153 aa).

The protein belongs to the RimP family.

The protein resides in the cytoplasm. Its function is as follows. Required for maturation of 30S ribosomal subunits. This is Ribosome maturation factor RimP from Rippkaea orientalis (strain PCC 8801 / RF-1) (Cyanothece sp. (strain PCC 8801)).